A 350-amino-acid polypeptide reads, in one-letter code: FAD:protein FMN transferase (350 aa).

Residues 1–19 (MKMTFCRAVCLAAAFLLMG) form the signal peptide. Cys-20 is lipidated: N-palmitoyl cysteine. The S-diacylglycerol cysteine moiety is linked to residue Cys-20. FAD contacts are provided by residues Met-41, Tyr-78, 119 to 121 (AMD), and Asp-181. Thr-184 contributes to the Mg(2+) binding site. The FAD site is built by Glu-187 and Ile-272. 3 residues coordinate Mg(2+): Asp-298, Asp-301, and Thr-302.

This sequence belongs to the ApbE family. Homodimer. Requires Mg(2+) as cofactor.

It localises to the cell inner membrane. It carries out the reaction L-threonyl-[protein] + FAD = FMN-L-threonyl-[protein] + AMP + H(+). In terms of biological role, flavin transferase that catalyzes the transfer of the FMN moiety of FAD and its covalent binding to the hydroxyl group of a threonine residue in a target flavoprotein such as NqrB and NqrC, two subunits of the NQR complex. The protein is FAD:protein FMN transferase of Salmonella typhimurium (strain LT2 / SGSC1412 / ATCC 700720).